Reading from the N-terminus, the 406-residue chain is Cysteine desulfurase (406 aa).

Residue lysine 226 is modified to N6-(pyridoxal phosphate)lysine. Cysteine 364 acts as the Cysteine persulfide intermediate in catalysis.

The protein belongs to the class-V pyridoxal-phosphate-dependent aminotransferase family. Csd subfamily. Homodimer. Interacts with SufE and the SufBCD complex composed of SufB, SufC and SufD. The interaction with SufE is required to mediate the direct transfer of the sulfur atom from the S-sulfanylcysteine. The cofactor is pyridoxal 5'-phosphate.

It localises to the cytoplasm. It carries out the reaction (sulfur carrier)-H + L-cysteine = (sulfur carrier)-SH + L-alanine. The enzyme catalyses L-selenocysteine + AH2 = hydrogenselenide + L-alanine + A + H(+). It functions in the pathway cofactor biosynthesis; iron-sulfur cluster biosynthesis. Cysteine desulfurases mobilize the sulfur from L-cysteine to yield L-alanine, an essential step in sulfur metabolism for biosynthesis of a variety of sulfur-containing biomolecules. Component of the suf operon, which is activated and required under specific conditions such as oxidative stress and iron limitation. Acts as a potent selenocysteine lyase in vitro, that mobilizes selenium from L-selenocysteine. Selenocysteine lyase activity is however unsure in vivo. The protein is Cysteine desulfurase of Yersinia pestis bv. Antiqua (strain Angola).